The sequence spans 80 residues: MIIPWQELDADTLNNLLEHFVLQEGTEYGEHDVSLADKVADVRTQLQQGLAVIVYSELHESVNIVPKATLDRAQVDDIPE.

The protein belongs to the UPF0270 family.

In Aeromonas hydrophila subsp. hydrophila (strain ATCC 7966 / DSM 30187 / BCRC 13018 / CCUG 14551 / JCM 1027 / KCTC 2358 / NCIMB 9240 / NCTC 8049), this protein is UPF0270 protein AHA_0994.